The following is a 579-amino-acid chain: Cyclin-T1-5 (579 aa).

Disordered regions lie at residues 1–27 (MAGV…HEKQ) and 271–419 (RVPA…GDAL). Residues 11–20 (YSESGVSSHS) are compositionally biased toward polar residues. Residues 274-283 (ASQGSEVESS) are compositionally biased toward low complexity. A compositionally biased stretch (polar residues) spans 306-334 (SRQTSSVRSTHEQSNSDNHGGSSKGVLNQ). 2 stretches are compositionally biased toward basic and acidic residues: residues 349-380 (DNKE…EAPH) and 389-414 (PGKD…RNVD). Ser-423 carries the phosphoserine modification. Composition is skewed to basic and acidic residues over residues 474–512 (DEKT…KNTE), 538–556 (KQSE…ESHK), and 563–579 (HHGD…NNHS). The disordered stretch occupies residues 474–579 (DEKTKERKVQ…RRHSQENNHS (106 aa)).

Belongs to the cyclin family. Cyclin T subfamily.

This chain is Cyclin-T1-5 (CYCT1-5), found in Arabidopsis thaliana (Mouse-ear cress).